We begin with the raw amino-acid sequence, 286 residues long: uncharacterized protein (286 aa).

The active-site Proton donor is His-183. Cys-277 functions as the Nucleophile in the catalytic mechanism.

The protein belongs to the DDAH family.

This is an uncharacterized protein from Bacillus subtilis (strain 168).